The sequence spans 83 residues: Large ribosomal subunit protein bL31B (83 aa).

This sequence belongs to the bacterial ribosomal protein bL31 family. Type B subfamily. In terms of assembly, part of the 50S ribosomal subunit.

The protein is Large ribosomal subunit protein bL31B of Levilactobacillus brevis (strain ATCC 367 / BCRC 12310 / CIP 105137 / JCM 1170 / LMG 11437 / NCIMB 947 / NCTC 947) (Lactobacillus brevis).